Here is a 200-residue protein sequence, read N- to C-terminus: Peroxiredoxin (200 aa).

The region spanning 6-166 is the Thioredoxin domain; the sequence is ARIGHLAPGF…ILRLVQAFQF (161 aa). Cysteine 52 (cysteine sulfenic acid (-SOH) intermediate) is an active-site residue.

This sequence belongs to the peroxiredoxin family. AhpC/Prx1 subfamily. Homodimer; disulfide-linked, upon oxidation.

It catalyses the reaction a hydroperoxide + [thioredoxin]-dithiol = an alcohol + [thioredoxin]-disulfide + H2O. Functionally, thiol-specific peroxidase that catalyzes the reduction of hydrogen peroxide and organic hydroperoxides to water and alcohols, respectively. Plays a role in cell protection against oxidative stress by detoxifying peroxides and as sensor of hydrogen peroxide-mediated signaling events. In Oncorhynchus mykiss (Rainbow trout), this protein is Peroxiredoxin.